The chain runs to 139 residues: CLAVATA3/ESR (CLE)-related protein 1 (139 aa).

An N-terminal signal peptide occupies residues 1–22 (MPNIFKILLIVLLAVVSFRLSA). Residues 23–90 (STGDKKTAND…VPSHLTNRSM (68 aa)) are required for secretion from the host cytoplasm to the host apoplasm. N-linked (GlcNAc...) asparagine glycosylation is found at asparagine 37 and asparagine 87. The tract at residues 66-139 (AIGRSNAQGG…SPSGPDPHHH (74 aa)) is disordered. Residues 100-125 (EKGAATRVEKMRAQLRELAEKMTDKD) adopt a coiled-coil conformation. Positions 106-128 (RVEKMRAQLRELAEKMTDKDPKR) are enriched in basic and acidic residues. The CLE motif lies at 128 to 139 (RLSPSGPDPHHH).

The protein belongs to the CLV3/ESR signal peptide family. In terms of tissue distribution, highly expressed exclusively within the dorsal esophageal gland cell during syncytium formation in host plants (at protein level).

It localises to the secreted. The protein localises to the host cytoplasm. Its subcellular location is the host extracellular space. The protein resides in the extracellular space. It is found in the apoplast. In terms of biological role, mimics host plant CLE extracellular signal peptides that regulate cell fate. May play a role in the differentiation or division of feeding cells (syncytia) induced in plant roots during infection. This Heterodera glycines (Soybean cyst nematode worm) protein is CLAVATA3/ESR (CLE)-related protein 1 (CLE1).